The following is a 155-amino-acid chain: NADH-ubiquinone oxidoreductase chain 6 (155 aa).

4 helical membrane passes run 24–44 (MSLL…LGSF), 51–71 (YILF…VCMI), 88–108 (AWGA…IILG), and 118–138 (IPMT…FAVV).

Belongs to the complex I subunit 6 family.

Its subcellular location is the mitochondrion membrane. The catalysed reaction is a ubiquinone + NADH + 5 H(+)(in) = a ubiquinol + NAD(+) + 4 H(+)(out). In terms of biological role, core subunit of the mitochondrial membrane respiratory chain NADH dehydrogenase (Complex I) that is believed to belong to the minimal assembly required for catalysis. Complex I functions in the transfer of electrons from NADH to the respiratory chain. The immediate electron acceptor for the enzyme is believed to be ubiquinone. The chain is NADH-ubiquinone oxidoreductase chain 6 (ND6) from Albinaria caerulea (Land snail).